A 271-amino-acid polypeptide reads, in one-letter code: Putative hydro-lyase OCAR_7359/OCA5_c07590 (271 aa).

This sequence belongs to the D-glutamate cyclase family.

The protein is Putative hydro-lyase OCAR_7359/OCA5_c07590 of Afipia carboxidovorans (strain ATCC 49405 / DSM 1227 / KCTC 32145 / OM5) (Oligotropha carboxidovorans).